A 205-amino-acid chain; its full sequence is MTERGLLIVLSGPSGVGKGTVREAVFKDPETSFDYSISMTTRLPREGEQDGVDYYFRSREVFEQAIKDGKMLEYAEYVGNYYGTPLEYVEEKLAAGIDIFLEIEVQGAMQVRKAMPEGIFIFLTPPDLSELKNRIIGRGTESMEVVEERMETAKKEIEMMASYDYAVVNDVVSKAVQKIKGIVETEHLKTERVIHRYKKMLEGLQ.

In terms of domain architecture, Guanylate kinase-like spans 5-184 (GLLIVLSGPS…AVQKIKGIVE (180 aa)). 12–19 (GPSGVGKG) contacts ATP.

The protein belongs to the guanylate kinase family.

It localises to the cytoplasm. The catalysed reaction is GMP + ATP = GDP + ADP. Its function is as follows. Essential for recycling GMP and indirectly, cGMP. The polypeptide is Guanylate kinase (Listeria innocua serovar 6a (strain ATCC BAA-680 / CLIP 11262)).